Consider the following 534-residue polypeptide: Bifunctional purine biosynthesis protein PurH (534 aa).

An MGS-like domain is found at 6-151; sequence TRLPIRRALI…KNHKDVAIVV (146 aa).

It belongs to the PurH family.

It carries out the reaction (6R)-10-formyltetrahydrofolate + 5-amino-1-(5-phospho-beta-D-ribosyl)imidazole-4-carboxamide = 5-formamido-1-(5-phospho-D-ribosyl)imidazole-4-carboxamide + (6S)-5,6,7,8-tetrahydrofolate. The catalysed reaction is IMP + H2O = 5-formamido-1-(5-phospho-D-ribosyl)imidazole-4-carboxamide. The protein operates within purine metabolism; IMP biosynthesis via de novo pathway; 5-formamido-1-(5-phospho-D-ribosyl)imidazole-4-carboxamide from 5-amino-1-(5-phospho-D-ribosyl)imidazole-4-carboxamide (10-formyl THF route): step 1/1. It participates in purine metabolism; IMP biosynthesis via de novo pathway; IMP from 5-formamido-1-(5-phospho-D-ribosyl)imidazole-4-carboxamide: step 1/1. The sequence is that of Bifunctional purine biosynthesis protein PurH from Pseudomonas syringae pv. tomato (strain ATCC BAA-871 / DC3000).